Consider the following 196-residue polypeptide: Cilia- and flagella-associated protein 107 (196 aa).

Mn stretches follow at residues 46-61 (TPQT…FPGH) and 96-108 (ISTY…RHNY). Positions 168–196 (YPRPPAGAMSRREHAIPVPPPRLQPVPHF) are disordered. Residues 184-196 (PVPPPRLQPVPHF) show a composition bias toward pro residues.

Microtubule inner protein component of sperm flagellar doublet microtubules. As to expression, expressed in trachea multiciliated cells.

It localises to the cytoplasm. It is found in the cytoskeleton. The protein localises to the cilium axoneme. The protein resides in the flagellum axoneme. Functionally, microtubule inner protein (MIP) part of the dynein-decorated doublet microtubules (DMTs) in cilia axoneme, which is required for motile cilia beating. This is Cilia- and flagella-associated protein 107 from Bos taurus (Bovine).